Here is a 451-residue protein sequence, read N- to C-terminus: MTENEQIFWNRVLELAQSQLKQATYEFFVHDARLLKVDKHIATIYLDQMKELFWEKNLKDVILTAGFEVYNAQISVDYVFEEDLMIEQNQTKINQKPKQQALNSLPTVTSDLNSKYSFENFIQGDENRWAVAASIAVANTPGTTYNPLFIWGGPGLGKTHLLNAIGNSVLLENPNARIKYITAENFINEFVIHIRLDTMDELKEKFRNLDLLLIDDIQSLAKKTLSGTQEEFFNTFNALHNNNKQIVLTSDRTPDHLNDLEDRLVTRFKWGLTVNITPPDFETRVAILTNKIQEYNFIFPQDTIEYLAGQFDSNVRDLEGALKDISLGANFKQIDTITVDIAAEAIRARKQDGPKMTVIPIEEIQAQGGKFYGVTGKEIKATKRTQNIVLARQVAMFLAREMTDNSLPKIGKEFGGRDHSTVLHAYNKIKNMISQDESLRIEIETIKNKIK.

The interval 1 to 77 (MTENEQIFWN…EVYNAQISVD (77 aa)) is domain I, interacts with DnaA modulators. Residues 77-110 (DYVFEEDLMIEQNQTKINQKPKQQALNSLPTVTS) form a domain II region. The tract at residues 111 to 329 (DLNSKYSFEN…GALKDISLGA (219 aa)) is domain III, AAA+ region. ATP-binding residues include Gly155, Gly157, Lys158, and Thr159. A domain IV, binds dsDNA region spans residues 330 to 451 (NFKQIDTITV…EIETIKNKIK (122 aa)).

The protein belongs to the DnaA family. In terms of assembly, oligomerizes as a right-handed, spiral filament on DNA at oriC.

The protein resides in the cytoplasm. In terms of biological role, plays an essential role in the initiation and regulation of chromosomal replication. ATP-DnaA binds to the origin of replication (oriC) to initiate formation of the DNA replication initiation complex once per cell cycle. Binds the DnaA box (a 9 base pair repeat at the origin) and separates the double-stranded (ds)DNA. Forms a right-handed helical filament on oriC DNA; dsDNA binds to the exterior of the filament while single-stranded (ss)DNA is stabiized in the filament's interior. The ATP-DnaA-oriC complex binds and stabilizes one strand of the AT-rich DNA unwinding element (DUE), permitting loading of DNA polymerase. After initiation quickly degrades to an ADP-DnaA complex that is not apt for DNA replication. Binds acidic phospholipids. The polypeptide is Chromosomal replication initiator protein DnaA (Streptococcus pyogenes serotype M49 (strain NZ131)).